A 389-amino-acid chain; its full sequence is Large ribosomal subunit protein uL3 (389 aa).

Belongs to the universal ribosomal protein uL3 family. In terms of assembly, component of the large ribosomal subunit. Mature ribosomes consist of a small (40S) and a large (60S) subunit. The 40S subunit contains about 32 different proteins and 1 molecule of RNA (18S). The 60S subunit contains 45 different proteins and 3 molecules of RNA (25S, 5.8S and 5S).

It is found in the cytoplasm. Functionally, component of the ribosome, a large ribonucleoprotein complex responsible for the synthesis of proteins in the cell. The small ribosomal subunit (SSU) binds messenger RNAs (mRNAs) and translates the encoded message by selecting cognate aminoacyl-transfer RNA (tRNA) molecules. The large subunit (LSU) contains the ribosomal catalytic site termed the peptidyl transferase center (PTC), which catalyzes the formation of peptide bonds, thereby polymerizing the amino acids delivered by tRNAs into a polypeptide chain. The nascent polypeptides leave the ribosome through a tunnel in the LSU and interact with protein factors that function in enzymatic processing, targeting, and the membrane insertion of nascent chains at the exit of the ribosomal tunnel. RPL3 plays a role in coordinating processes of accommodating the aminoacyl-tRNA in the PTC. The sequence is that of Large ribosomal subunit protein uL3 from Candida albicans (strain SC5314 / ATCC MYA-2876) (Yeast).